We begin with the raw amino-acid sequence, 256 residues long: MVALRLIPCLDVARGRVVKGVNFVGLRDAGDPVELACRYSRAGADELVFLDIAASHEGRGTLIDMVRRTAESVTIPFTVGGGISTVEGITELLRAGADKVSLNSSAVRRPELVREGADQFGCQCIVVAIDARRRDAGGWDVYVKGGRENTGLDVVEWAQRVAGLGAGEILLTSMDGDGTQAGYDLALTRAVADAVPIPVIASGGAGCLDHIAEALDVGPTGGHASAALLASLLHDGVLTVEEIKQDLLSRGLTIRP.

Catalysis depends on residues D11 and D130.

This sequence belongs to the HisA/HisF family. In terms of assembly, heterodimer of HisH and HisF.

It is found in the cytoplasm. It catalyses the reaction 5-[(5-phospho-1-deoxy-D-ribulos-1-ylimino)methylamino]-1-(5-phospho-beta-D-ribosyl)imidazole-4-carboxamide + L-glutamine = D-erythro-1-(imidazol-4-yl)glycerol 3-phosphate + 5-amino-1-(5-phospho-beta-D-ribosyl)imidazole-4-carboxamide + L-glutamate + H(+). Its pathway is amino-acid biosynthesis; L-histidine biosynthesis; L-histidine from 5-phospho-alpha-D-ribose 1-diphosphate: step 5/9. Functionally, IGPS catalyzes the conversion of PRFAR and glutamine to IGP, AICAR and glutamate. The HisF subunit catalyzes the cyclization activity that produces IGP and AICAR from PRFAR using the ammonia provided by the HisH subunit. In Synechococcus sp. (strain CC9605), this protein is Imidazole glycerol phosphate synthase subunit HisF.